The primary structure comprises 88 residues: Large ribosomal subunit protein bL27 (88 aa).

The disordered stretch occupies residues 1–21 (MAHKKGASSSRNGRDSNAKRL).

Belongs to the bacterial ribosomal protein bL27 family.

This chain is Large ribosomal subunit protein bL27, found in Thermobifida fusca (strain YX).